The following is an 84-amino-acid chain: Large ribosomal subunit protein bL27 (84 aa).

The interval 1–22 (MAHKKAGGSTRNGRDSESKRLG) is disordered.

It belongs to the bacterial ribosomal protein bL27 family.

This Shewanella loihica (strain ATCC BAA-1088 / PV-4) protein is Large ribosomal subunit protein bL27.